We begin with the raw amino-acid sequence, 468 residues long: ATP synthase subunit beta (468 aa).

Gly-155–Thr-162 serves as a coordination point for ATP.

The protein belongs to the ATPase alpha/beta chains family. F-type ATPases have 2 components, CF(1) - the catalytic core - and CF(0) - the membrane proton channel. CF(1) has five subunits: alpha(3), beta(3), gamma(1), delta(1), epsilon(1). CF(0) has three main subunits: a(1), b(2) and c(9-12). The alpha and beta chains form an alternating ring which encloses part of the gamma chain. CF(1) is attached to CF(0) by a central stalk formed by the gamma and epsilon chains, while a peripheral stalk is formed by the delta and b chains.

It is found in the cell membrane. The catalysed reaction is ATP + H2O + 4 H(+)(in) = ADP + phosphate + 5 H(+)(out). Functionally, produces ATP from ADP in the presence of a proton gradient across the membrane. The catalytic sites are hosted primarily by the beta subunits. This Bacillus cereus (strain B4264) protein is ATP synthase subunit beta.